The sequence spans 223 residues: Pre-hexon-linking protein VIII (223 aa).

Threonine 64 bears the Phosphothreonine; by host mark. Residues 112 to 153 constitute a propeptide that is removed on maturation; it reads GALAPRDLYALTLRGRGIQLNEDLPLSASTLRPDGIFQLGGG. Serine 170 carries the post-translational modification Phosphoserine; by host.

Belongs to the adenoviridae hexon-linking protein family. In terms of assembly, interacts with the peripentonal hexons as well as the hexons in the facets. Part of a complex composed of the core-capsid bridging protein, the endosome lysis protein VI and the hexon-linking protein VIII; these interactions bridge the virus core to the capsid. Cleaved by the viral protease during virion maturation. May cause the middle segment to be shed from the capsid.

Its subcellular location is the virion. It localises to the host nucleus. Its function is as follows. Structural component of the virion that acts as a cement protein on the capsid interior and which glue the peripentonal hexons and group-of-nine hexons together. This Porcine adenovirus A serotype 3 (PAdV-3) protein is Pre-hexon-linking protein VIII.